The chain runs to 604 residues: Linalool synthase Tps-5042L13, chloroplastic (604 aa).

Residues 1-34 (MSSMRIYVAIMKKPSVKHVDNVDKKASKPSWRVS) constitute a chloroplast transit peptide. 5 residues coordinate (2E)-geranyl diphosphate: arginine 323, aspartate 360, aspartate 364, arginine 501, and aspartate 504. Aspartate 360 and aspartate 364 together coordinate Mg(2+). Positions 360–364 (DDVYD) match the DDXXD motif motif. Mg(2+) is bound by residues aspartate 504, threonine 508, and glutamate 512.

This sequence belongs to the terpene synthase family. Tpsb subfamily. As to quaternary structure, monomer. Mg(2+) serves as cofactor. Requires Mn(2+) as cofactor.

It localises to the plastid. It is found in the chloroplast. The catalysed reaction is (2E)-geranyl diphosphate + H2O = linalool + diphosphate. It functions in the pathway secondary metabolite biosynthesis; terpenoid biosynthesis. In terms of biological role, monoterpene synthase (mono-TPS) involved in the biosynthesis of monoterpenes natural products. Catalyzes the conversion of (2E)-geranyl diphosphate (GPP) into linalool. This is Linalool synthase Tps-5042L13, chloroplastic from Perilla frutescens (Beefsteak mint).